We begin with the raw amino-acid sequence, 555 residues long: Potassium-transporting ATPase potassium-binding subunit (555 aa).

Helical transmembrane passes span 2-22, 60-80, 130-150, 173-193, 246-266, 278-298, 374-394, 412-432, 483-503, and 525-545; these read IWVAVIITMLLFILVAKPTGI, QYALSLVLLNGFMIVVVYFIF, IGITFLMFAAPATTLALVMAF, VFLPIAFIAALVFVALGVPQT, MSNILQMMLMMLLPTALPFTY, ILFVSLFMVFLLGFITITTSE, AGFVNIIMYAIIAVFISGLMV, LIAVTILFHPLLILGFSALAL, LVMFLGRYFSLITMLAVAASL, and GIFIGTIVIVGALTFFPMLVL.

This sequence belongs to the KdpA family. The system is composed of three essential subunits: KdpA, KdpB and KdpC.

It is found in the cell membrane. In terms of biological role, part of the high-affinity ATP-driven potassium transport (or Kdp) system, which catalyzes the hydrolysis of ATP coupled with the electrogenic transport of potassium into the cytoplasm. This subunit binds the extracellular potassium ions and delivers the ions to the membrane domain of KdpB through an intramembrane tunnel. This is Potassium-transporting ATPase potassium-binding subunit from Bacillus cereus (strain G9842).